The primary structure comprises 345 residues: Glycerol-3-phosphate dehydrogenase [NAD(P)+] (345 aa).

The NADPH site is built by S23, Y24, H44, and K118. K118, G147, and T149 together coordinate sn-glycerol 3-phosphate. A151 lines the NADPH pocket. Sn-glycerol 3-phosphate contacts are provided by K203, D256, S266, R267, and N268. K203 serves as the catalytic Proton acceptor. R267 provides a ligand contact to NADPH. Residues V291 and E293 each contribute to the NADPH site.

This sequence belongs to the NAD-dependent glycerol-3-phosphate dehydrogenase family.

Its subcellular location is the cytoplasm. The enzyme catalyses sn-glycerol 3-phosphate + NAD(+) = dihydroxyacetone phosphate + NADH + H(+). It catalyses the reaction sn-glycerol 3-phosphate + NADP(+) = dihydroxyacetone phosphate + NADPH + H(+). It participates in membrane lipid metabolism; glycerophospholipid metabolism. In terms of biological role, catalyzes the reduction of the glycolytic intermediate dihydroxyacetone phosphate (DHAP) to sn-glycerol 3-phosphate (G3P), the key precursor for phospholipid synthesis. The chain is Glycerol-3-phosphate dehydrogenase [NAD(P)+] from Vibrio vulnificus (strain CMCP6).